We begin with the raw amino-acid sequence, 326 residues long: Fructose operon regulatory protein (326 aa).

Residues M1–A58 enclose the HTH lacI-type domain. Positions L3–N22 form a DNA-binding region, H-T-H motif.

As to quaternary structure, homodimer.

Its activity is regulated as follows. Interaction with F1P may induce a structural change in the DNA spacer region between the -35 and -10 elements, thereby facilitating RNAP binding to the promoter to trigger the transcriptional activation of the fru operon. Interaction with F1P does not release FruR from its binding sequence. Functionally, regulates the expression of the fruBKA (fru) operon, which encodes proteins involved in the import and metabolism of fructose. In the absence of fructose 1-phosphate (F1P), binds to the promoter region of fruB, interferes with the binding of the RNA polymerase (RNAP) to the promoter and represses the expression of the operon. In the presence of F1P, activates the transcription of the fru operon by facilitating the binding of RNAP to the promoter. Essential for the expression of the fru operon and thus for growth on fructose. This chain is Fructose operon regulatory protein, found in Vibrio cholerae serotype O1 (strain ATCC 39315 / El Tor Inaba N16961).